Consider the following 153-residue polypeptide: MAHPLIPAILDLARPIADDLDLEVVQAVFHTNQSPPILRLDIRSRVGDTGLEDCERMSRSFELALDEANIIPDAYVLEISSPGLSDTLESDRDFLSFKGFPVQVTSRSPNDDTVEQQGTLLGRDADSVYLNKRGRTVRIARSQVLEVKLIEQL.

Belongs to the RimP family.

Its subcellular location is the cytoplasm. Required for maturation of 30S ribosomal subunits. The sequence is that of Ribosome maturation factor RimP from Synechococcus elongatus (strain ATCC 33912 / PCC 7942 / FACHB-805) (Anacystis nidulans R2).